Consider the following 291-residue polypeptide: Ribosomal RNA small subunit methyltransferase A (291 aa).

His-37, Leu-39, Gly-64, Glu-85, Asp-110, and Asn-131 together coordinate S-adenosyl-L-methionine.

This sequence belongs to the class I-like SAM-binding methyltransferase superfamily. rRNA adenine N(6)-methyltransferase family. RsmA subfamily.

It is found in the cytoplasm. The enzyme catalyses adenosine(1518)/adenosine(1519) in 16S rRNA + 4 S-adenosyl-L-methionine = N(6)-dimethyladenosine(1518)/N(6)-dimethyladenosine(1519) in 16S rRNA + 4 S-adenosyl-L-homocysteine + 4 H(+). In terms of biological role, specifically dimethylates two adjacent adenosines (A1518 and A1519) in the loop of a conserved hairpin near the 3'-end of 16S rRNA in the 30S particle. May play a critical role in biogenesis of 30S subunits. The chain is Ribosomal RNA small subunit methyltransferase A from Dehalococcoides mccartyi (strain CBDB1).